The following is a 225-amino-acid chain: NAD(P)H-quinone oxidoreductase subunit K, chloroplastic (225 aa).

Residues Cys43, Cys44, Cys108, and Cys139 each coordinate [4Fe-4S] cluster.

Belongs to the complex I 20 kDa subunit family. In terms of assembly, NDH is composed of at least 16 different subunits, 5 of which are encoded in the nucleus. It depends on [4Fe-4S] cluster as a cofactor.

Its subcellular location is the plastid. It is found in the chloroplast thylakoid membrane. The catalysed reaction is a plastoquinone + NADH + (n+1) H(+)(in) = a plastoquinol + NAD(+) + n H(+)(out). It carries out the reaction a plastoquinone + NADPH + (n+1) H(+)(in) = a plastoquinol + NADP(+) + n H(+)(out). In terms of biological role, NDH shuttles electrons from NAD(P)H:plastoquinone, via FMN and iron-sulfur (Fe-S) centers, to quinones in the photosynthetic chain and possibly in a chloroplast respiratory chain. The immediate electron acceptor for the enzyme in this species is believed to be plastoquinone. Couples the redox reaction to proton translocation, and thus conserves the redox energy in a proton gradient. The sequence is that of NAD(P)H-quinone oxidoreductase subunit K, chloroplastic from Nymphaea alba (White water-lily).